Consider the following 153-residue polypeptide: Phosphopantetheine adenylyltransferase (153 aa).

Residue Ser-11 coordinates substrate. Residues 11–12 (SF) and His-19 contribute to the ATP site. Substrate is bound by residues Lys-43, Thr-75, and Arg-89. Residues 90–92 (GIR), Glu-100, and 124–130 (LSFISSS) contribute to the ATP site.

The protein belongs to the bacterial CoaD family. As to quaternary structure, homohexamer. Mg(2+) is required as a cofactor.

The protein localises to the cytoplasm. The catalysed reaction is (R)-4'-phosphopantetheine + ATP + H(+) = 3'-dephospho-CoA + diphosphate. It functions in the pathway cofactor biosynthesis; coenzyme A biosynthesis; CoA from (R)-pantothenate: step 4/5. Functionally, reversibly transfers an adenylyl group from ATP to 4'-phosphopantetheine, yielding dephospho-CoA (dPCoA) and pyrophosphate. In Porphyromonas gingivalis (strain ATCC 33277 / DSM 20709 / CIP 103683 / JCM 12257 / NCTC 11834 / 2561), this protein is Phosphopantetheine adenylyltransferase.